Consider the following 196-residue polypeptide: NADPH:quinone oxidoreductase (196 aa).

This sequence belongs to the SsuE family. As to quaternary structure, homotetramer. The cofactor is FMN.

The protein resides in the cell membrane. The enzyme catalyses a quinone + NADH + H(+) = a quinol + NAD(+). It catalyses the reaction a quinone + NADPH + H(+) = a quinol + NADP(+). Its function is as follows. The enzyme apparently serves as a quinone reductase in connection with conjugation reactions of hydroquinones involved in detoxification pathways. The polypeptide is NADPH:quinone oxidoreductase (NQR) (Arabidopsis thaliana (Mouse-ear cress)).